The primary structure comprises 4870 residues: Malformin synthetase mlfA (4870 aa).

An adenylation 1 region spans residues E106–L497. The Carrier 1 domain occupies L635 to E711. S672 is modified (O-(pantetheine 4'-phosphoryl)serine). The condensation 1 stretch occupies residues E749–A1133. The tract at residues D1161 to R1550 is adenylation 2. A Carrier 2 domain is found at T1688 to T1765. S1725 carries the O-(pantetheine 4'-phosphoryl)serine modification. Disordered stretches follow at residues A1764–V1794 and G1829–V1859. 2 stretches are compositionally biased toward low complexity: residues E1769–D1792 and S1830–S1846. The condensation 2 stretch occupies residues E1898 to L2313. The interval V2336–L2728 is adenylation 3. The Carrier 3 domain maps to R2864–G2940. S2901 bears the O-(pantetheine 4'-phosphoryl)serine mark. Condensation regions lie at residues W2957–Q3422 and D3443–V3862. Residues H3887 to F4277 form an adenylation 4 region. One can recognise a Carrier 4 domain in the interval M4411–V4487. The residue at position 4448 (S4448) is an O-(pantetheine 4'-phosphoryl)serine. The condensation 5 stretch occupies residues E4524 to N4837.

It belongs to the NRP synthetase family.

The protein operates within secondary metabolite biosynthesis. Nonribosomal peptide synthetase; part of the gene cluster that mediates the biosynthesis of malformins, cyclic pentapeptides with a disulfide bond between 2 consecutive cysteins, that show potential anti-tumor as well as antimalarial and antitrypanosomal properties. The nonribosomal peptide synthetase mlfA is responsible of the formation of the cyclic pentapeptide. The malformin biosynthesis clusters in malformin-producing fungi also contain enzymes involved in the formation of the disulfide bond between the two consecutive cysteins within malformins, in addition to additional tailoring enzymes such as methyltransferases or oxidoreductases. They are also composed of up to 4 major facilitator superfamily transporters, and transcription factors probably involved in the regulation of the expression of those clusters. The protein is Malformin synthetase mlfA of Aspergillus niger (strain ATCC 1015 / CBS 113.46 / FGSC A1144 / LSHB Ac4 / NCTC 3858a / NRRL 328 / USDA 3528.7).